The chain runs to 287 residues: Probable F-box protein At5g04010 (287 aa).

An F-box; degenerate domain is found at proline 50–phenylalanine 101.

In Arabidopsis thaliana (Mouse-ear cress), this protein is Probable F-box protein At5g04010 (NSFBx).